Consider the following 589-residue polypeptide: Aspartate--tRNA ligase (589 aa).

Glutamate 172 contacts L-aspartate. The interval 196-199 (QLFK) is aspartate. Residue arginine 218 participates in L-aspartate binding. ATP-binding positions include 218–220 (RDE) and glutamine 227. Histidine 449 serves as a coordination point for L-aspartate. Glutamate 483 is an ATP binding site. Arginine 490 contacts L-aspartate. 535–538 (GLDR) serves as a coordination point for ATP.

Belongs to the class-II aminoacyl-tRNA synthetase family. Type 1 subfamily. Homodimer.

It localises to the cytoplasm. The enzyme catalyses tRNA(Asp) + L-aspartate + ATP = L-aspartyl-tRNA(Asp) + AMP + diphosphate. In terms of biological role, catalyzes the attachment of L-aspartate to tRNA(Asp) in a two-step reaction: L-aspartate is first activated by ATP to form Asp-AMP and then transferred to the acceptor end of tRNA(Asp). The protein is Aspartate--tRNA ligase of Haemophilus ducreyi (strain 35000HP / ATCC 700724).